Reading from the N-terminus, the 380-residue chain is Queuine tRNA-ribosyltransferase (380 aa).

Catalysis depends on D96, which acts as the Proton acceptor. Residues 96–100 (DSGGF), D150, Q193, and G220 contribute to the substrate site. The RNA binding stretch occupies residues 251 to 257 (GVGAPDS). Residue D270 is the Nucleophile of the active site. The tract at residues 275–279 (TRIAR) is RNA binding; important for wobble base 34 recognition. 4 residues coordinate Zn(2+): C308, C310, C313, and H339.

This sequence belongs to the queuine tRNA-ribosyltransferase family. Homodimer. Within each dimer, one monomer is responsible for RNA recognition and catalysis, while the other monomer binds to the replacement base PreQ1. Requires Zn(2+) as cofactor.

The catalysed reaction is 7-aminomethyl-7-carbaguanine + guanosine(34) in tRNA = 7-aminomethyl-7-carbaguanosine(34) in tRNA + guanine. Its pathway is tRNA modification; tRNA-queuosine biosynthesis. Functionally, catalyzes the base-exchange of a guanine (G) residue with the queuine precursor 7-aminomethyl-7-deazaguanine (PreQ1) at position 34 (anticodon wobble position) in tRNAs with GU(N) anticodons (tRNA-Asp, -Asn, -His and -Tyr). Catalysis occurs through a double-displacement mechanism. The nucleophile active site attacks the C1' of nucleotide 34 to detach the guanine base from the RNA, forming a covalent enzyme-RNA intermediate. The proton acceptor active site deprotonates the incoming PreQ1, allowing a nucleophilic attack on the C1' of the ribose to form the product. After dissociation, two additional enzymatic reactions on the tRNA convert PreQ1 to queuine (Q), resulting in the hypermodified nucleoside queuosine (7-(((4,5-cis-dihydroxy-2-cyclopenten-1-yl)amino)methyl)-7-deazaguanosine). This chain is Queuine tRNA-ribosyltransferase, found in Streptococcus pyogenes serotype M1.